Reading from the N-terminus, the 110-residue chain is UPF0122 protein GWCH70_1086 (110 aa).

Belongs to the UPF0122 family.

Its function is as follows. Might take part in the signal recognition particle (SRP) pathway. This is inferred from the conservation of its genetic proximity to ftsY/ffh. May be a regulatory protein. The protein is UPF0122 protein GWCH70_1086 of Geobacillus sp. (strain WCH70).